Reading from the N-terminus, the 463-residue chain is Proton-coupled folate transporter (463 aa).

Over M1 to V27 the chain is Cytoplasmic. Residues E28 to T46 form a helical membrane-spanning segment. Over Q47–T86 the chain is Extracellular. N60 and N70 each carry an N-linked (GlcNAc...) asparagine glycan. The cysteines at positions 67 and 302 are disulfide-linked. A helical membrane pass occupies residues A87–S112. The Cytoplasmic portion of the chain corresponds to D113 to G116. The helical transmembrane segment at R117–M139 threads the bilayer. The Extracellular portion of the chain corresponds to Y140 to H144. The chain crosses the membrane as a helical span at residues V145–S158. Topologically, residues G159–R181 are cytoplasmic. Residues D160 and E189 each contribute to the H(+) site. A helical transmembrane segment spans residues T182–R207. At K208–Y212 the chain is on the extracellular side. A helical membrane pass occupies residues I213–Y231. Topologically, residues F232–K270 are cytoplasmic. The helical transmembrane segment at L271–V293 threads the bilayer. H285 is a binding site for H(+). Topologically, residues L294 to D306 are extracellular. The chain crosses the membrane as a helical span at residues L307–F329. Topologically, residues Q330–D335 are cytoplasmic. Residues S336–L355 form a helical membrane-spanning segment. Over A356–T359 the chain is Extracellular. Residues P360–R380 traverse the membrane as a helical segment. Residues S381–Q392 are Cytoplasmic-facing. Residues G393–Y418 form a helical membrane-spanning segment. Residues P419–K426 lie on the Extracellular side of the membrane. Residues G427–G445 form a helical membrane-spanning segment. The Cytoplasmic segment spans residues L446–S463.

Belongs to the major facilitator superfamily. SLC46A family. Monomer.

It localises to the cell membrane. It is found in the apical cell membrane. Its subcellular location is the basolateral cell membrane. The protein resides in the endosome membrane. The protein localises to the cytoplasm. The enzyme catalyses folate(in) + H(+)(in) = folate(out) + H(+)(out). The catalysed reaction is (6S)-5-methyl-5,6,7,8-tetrahydrofolate(in) + H(+)(in) = (6S)-5-methyl-5,6,7,8-tetrahydrofolate(out) + H(+)(out). It catalyses the reaction methotrexate(in) + H(+)(in) = methotrexate(out) + H(+)(out). It carries out the reaction pemetrexed(in) + H(+)(in) = pemetrexed(out) + H(+)(out). In terms of biological role, proton-coupled folate symporter that mediates folate absorption using an H(+) gradient as a driving force. Involved in the intestinal absorption of folates at the brush-border membrane of the proximal jejunum, and the transport from blood to cerebrospinal fluid across the choroid plexus. Functions at acidic pH via alternate outward- and inward-open conformation states. Protonation of residues in the outward open state primes the protein for transport. Binding of folate promotes breaking of salt bridge network and subsequent closure of the extracellular gate, leading to the inward-open state and release of protons and folate. Also able to transport antifolate drugs, such as methotrexate and pemetrexed. Also acts as a lower-affinity, pH-independent heme carrier protein and constitutes the main importer of heme in the intestine. Imports heme in the retina and retinal pigment epithelium, in neurons of the hippocampus, in hepatocytes and in the renal epithelial cells. This Xenopus laevis (African clawed frog) protein is Proton-coupled folate transporter.